Here is a 536-residue protein sequence, read N- to C-terminus: Cytochrome P450 78A7 (536 aa).

A helical transmembrane segment spans residues 36–56; sequence LFLAVVFLSIVTWALAGGGGV. Cys481 serves as a coordination point for heme.

This sequence belongs to the cytochrome P450 family. It depends on heme as a cofactor.

The protein localises to the membrane. Its function is as follows. Functions probably in association with CYP78A5 in regulating relative growth of the shoot apical meristem and plant organs via a non-cell-autonomous signal. The sequence is that of Cytochrome P450 78A7 (CYP78A7) from Arabidopsis thaliana (Mouse-ear cress).